We begin with the raw amino-acid sequence, 454 residues long: Putative serine carboxypeptidase-like 23 (454 aa).

The signal sequence occupies residues 1-22 (MARIHLIIILLVISSTSSSSSS). N-linked (GlcNAc...) asparagine glycosylation is found at N52, N102, and N136. Intrachain disulfides connect C85–C338, C247–C258, and C282–C306. S178 is an active-site residue. N287 and N327 each carry an N-linked (GlcNAc...) asparagine glycan. Catalysis depends on residues D375 and H427.

It belongs to the peptidase S10 family. As to expression, expression not detected.

Its subcellular location is the secreted. Functionally, probable carboxypeptidase. The protein is Putative serine carboxypeptidase-like 23 (SCPL23) of Arabidopsis thaliana (Mouse-ear cress).